Reading from the N-terminus, the 343-residue chain is Geranylgeranyl pyrophosphate synthase (343 aa).

Positions 1-12 (MAYTVEPREHSK) are enriched in basic and acidic residues. A disordered region spans residues 1–26 (MAYTVEPREHSKNTTLPTVAMPPSPP). Lys-69, Arg-72, and His-101 together coordinate isopentenyl diphosphate. Residues Asp-108 and Asp-112 each coordinate Mg(2+). Arg-117 serves as a coordination point for dimethylallyl diphosphate. Arg-118 is a binding site for isopentenyl diphosphate. Dimethylallyl diphosphate-binding residues include Thr-196 and Gln-229. Residue Asp-232 coordinates Mg(2+). Dimethylallyl diphosphate contacts are provided by Asn-236, Lys-246, and Lys-256.

The protein belongs to the FPP/GGPP synthase family. The cofactor is Mg(2+).

It catalyses the reaction isopentenyl diphosphate + dimethylallyl diphosphate = (2E)-geranyl diphosphate + diphosphate. The catalysed reaction is isopentenyl diphosphate + (2E)-geranyl diphosphate = (2E,6E)-farnesyl diphosphate + diphosphate. The enzyme catalyses isopentenyl diphosphate + (2E,6E)-farnesyl diphosphate = (2E,6E,10E)-geranylgeranyl diphosphate + diphosphate. Its pathway is mycotoxin biosynthesis. Geranylgeranyl pyrophosphate synthase; part of the gene cluster that mediates the biosynthesis of aphidicolin, a specific inhibitor of eukaryotic DNA synthesis and DNA polymerase alpha. The geranylgeranyl pyrophosphate synthase GGS is required for supplying a sufficient amount of geranylgeranyl diphosphate (GGDP), the general precursor of diterpenes. The diterpene synthase ACS then catalyzes the conversion of geranylgeranyl diphosphate to aphidicolan-16-beta-ol via the intermediate syn-copalyldiphosphate (syn-CDP). In addition to aphidicolan-16-beta-ol, the enzyme also produces low levels of amphidicol-15-ene and amphidicol-16-ene. The cytochrome P450 monooxygenase P450-2 then catalyzes the two-step hydroxylation from aphidicolan-16-beta-ol to 3-deoxyaphidicolin via a 17,3-deoxyaphidicolin intermediate. Finally, the cytochrome P450 monooxygenase P450-1 converts 3-deoxyaphidicolin to aphidicolin. This is Geranylgeranyl pyrophosphate synthase (GGS) from Neocamarosporium betae (Beet black rot fungus).